A 493-amino-acid chain; its full sequence is Aspartyl/glutamyl-tRNA(Asn/Gln) amidotransferase subunit B (493 aa).

The interval 473–493 (KSGGKANPKQAADLVNKRLTE) is disordered.

The protein belongs to the GatB/GatE family. GatB subfamily. Heterotrimer of A, B and C subunits.

The catalysed reaction is L-glutamyl-tRNA(Gln) + L-glutamine + ATP + H2O = L-glutaminyl-tRNA(Gln) + L-glutamate + ADP + phosphate + H(+). It catalyses the reaction L-aspartyl-tRNA(Asn) + L-glutamine + ATP + H2O = L-asparaginyl-tRNA(Asn) + L-glutamate + ADP + phosphate + 2 H(+). Functionally, allows the formation of correctly charged Asn-tRNA(Asn) or Gln-tRNA(Gln) through the transamidation of misacylated Asp-tRNA(Asn) or Glu-tRNA(Gln) in organisms which lack either or both of asparaginyl-tRNA or glutaminyl-tRNA synthetases. The reaction takes place in the presence of glutamine and ATP through an activated phospho-Asp-tRNA(Asn) or phospho-Glu-tRNA(Gln). The sequence is that of Aspartyl/glutamyl-tRNA(Asn/Gln) amidotransferase subunit B from Treponema denticola (strain ATCC 35405 / DSM 14222 / CIP 103919 / JCM 8153 / KCTC 15104).